Reading from the N-terminus, the 370-residue chain is Anhydro-N-acetylmuramic acid kinase (370 aa).

An ATP-binding site is contributed by 13-20 (GTSMDGVD).

It belongs to the anhydro-N-acetylmuramic acid kinase family.

It catalyses the reaction 1,6-anhydro-N-acetyl-beta-muramate + ATP + H2O = N-acetyl-D-muramate 6-phosphate + ADP + H(+). It functions in the pathway amino-sugar metabolism; 1,6-anhydro-N-acetylmuramate degradation. The protein operates within cell wall biogenesis; peptidoglycan recycling. Functionally, catalyzes the specific phosphorylation of 1,6-anhydro-N-acetylmuramic acid (anhMurNAc) with the simultaneous cleavage of the 1,6-anhydro ring, generating MurNAc-6-P. Is required for the utilization of anhMurNAc either imported from the medium or derived from its own cell wall murein, and thus plays a role in cell wall recycling. The chain is Anhydro-N-acetylmuramic acid kinase from Vibrio vulnificus (strain CMCP6).